The chain runs to 290 residues: Putative phosphoenolpyruvate synthase regulatory protein (290 aa).

An ADP-binding site is contributed by 170–177 (GVSRCGKT).

The protein belongs to the pyruvate, phosphate/water dikinase regulatory protein family. PSRP subfamily.

The enzyme catalyses [pyruvate, water dikinase] + ADP = [pyruvate, water dikinase]-phosphate + AMP + H(+). It carries out the reaction [pyruvate, water dikinase]-phosphate + phosphate + H(+) = [pyruvate, water dikinase] + diphosphate. Bifunctional serine/threonine kinase and phosphorylase involved in the regulation of the phosphoenolpyruvate synthase (PEPS) by catalyzing its phosphorylation/dephosphorylation. This chain is Putative phosphoenolpyruvate synthase regulatory protein (ydiA), found in Enterobacter agglomerans (Erwinia herbicola).